The primary structure comprises 393 residues: Major outer membrane protein P.IA (393 aa).

Positions 1 to 19 (MRKKLTALVLSALPLAAVA) are cleaved as a signal peptide.

It belongs to the Gram-negative porin family. Homotrimer.

It localises to the cell outer membrane. In terms of biological role, serves as a slightly cation selective porin. Major antigen on the gonococcal cell surface and it may have pathogenic properties in addition to its porin activity. The chain is Major outer membrane protein P.IA (porA) from Neisseria meningitidis serogroup C.